We begin with the raw amino-acid sequence, 134 residues long: Ribosome-binding factor A (134 aa).

Belongs to the RbfA family. As to quaternary structure, monomer. Binds 30S ribosomal subunits, but not 50S ribosomal subunits or 70S ribosomes.

Its subcellular location is the cytoplasm. Functionally, one of several proteins that assist in the late maturation steps of the functional core of the 30S ribosomal subunit. Associates with free 30S ribosomal subunits (but not with 30S subunits that are part of 70S ribosomes or polysomes). Required for efficient processing of 16S rRNA. May interact with the 5'-terminal helix region of 16S rRNA. This Psychrobacter arcticus (strain DSM 17307 / VKM B-2377 / 273-4) protein is Ribosome-binding factor A.